Reading from the N-terminus, the 336-residue chain is N-lysine methyltransferase KMT5A-B (336 aa).

Disordered regions lie at residues 1–107 (MGRG…SSKQ) and 141–165 (QSQKMVKNKSQRRKAQRKKSPNRKL). Over residues 67-93 (SVAHHESKNLGKPTTETRKKAEVEKKR) the composition is skewed to basic and acidic residues. Over residues 95 to 104 (SSATELSVKS) the composition is skewed to polar residues. The segment covering 146-162 (VKNKSQRRKAQRKKSPN) has biased composition (basic residues). Residues 200 to 321 (DGMKMDMIIG…VGEELLYDYG (122 aa)) form the SET domain. Residues 210 to 212 (KGR), Tyr-255, and 282 to 283 (NH) each bind S-adenosyl-L-methionine.

It belongs to the class V-like SAM-binding methyltransferase superfamily. Histone-lysine methyltransferase family. PR/SET subfamily. Post-translationally, phosphorylated during mitosis.

It is found in the nucleus. The protein localises to the chromosome. The enzyme catalyses L-lysyl(20)-[histone H4] + S-adenosyl-L-methionine = N(6)-methyl-L-lysyl(20)-[histone H4] + S-adenosyl-L-homocysteine + H(+). The catalysed reaction is L-lysyl-[protein] + S-adenosyl-L-methionine = N(6)-methyl-L-lysyl-[protein] + S-adenosyl-L-homocysteine + H(+). Its function is as follows. Protein-lysine N-methyltransferase that monomethylates both histones and non-histone proteins. Specifically monomethylates 'Lys-20' of histone H4 (H4K20me1). H4K20me1 is enriched during mitosis and represents a specific tag for epigenetic transcriptional repression. Mainly functions in euchromatin regions, thereby playing a central role in the silencing of euchromatic genes. Required for cell proliferation, probably by contributing to the maintenance of proper higher-order structure of DNA during mitosis. Involved in chromosome condensation and proper cytokinesis. This Xenopus laevis (African clawed frog) protein is N-lysine methyltransferase KMT5A-B.